The following is a 491-amino-acid chain: Protein DETOXIFICATION 56 (491 aa).

A run of 12 helical transmembrane segments spans residues 39–59, 72–92, 111–131, 154–174, 181–201, 212–232, 261–281, 291–311, 336–356, 379–399, 409–429, and 438–458; these read LPLV…SVFL, LGFS…SAAM, TLFM…FLWL, LLYL…KAYL, LPIM…NIVL, MAVW…VIVV, GPCC…VLLT, VSIL…MLSL, YTTL…MIAF, MLIM…GEIV, MYAN…TLAF, and FLIG…IFIA.

This sequence belongs to the multi antimicrobial extrusion (MATE) (TC 2.A.66.1) family. In terms of assembly, interacts with BCA4 and HT1. As to expression, preferentially expressed in guard cells.

The protein localises to the cell membrane. In terms of biological role, could function as a HCO(3)(-) -sensing component in the CO(2) signaling pathway in guard cells. Acts as an upstream repressor of HT1. Plays a role in stomatal response to CO(2). The protein is Protein DETOXIFICATION 56 of Arabidopsis thaliana (Mouse-ear cress).